Here is a 296-residue protein sequence, read N- to C-terminus: Ceramide synthase LOH2 (296 aa).

6 helical membrane-spanning segments follow: residues 19–39, 80–100, 121–141, 158–178, 206–226, and 254–274; these read VWHF…RLVL, LLYY…EPWA, LYYM…LAWE, IILL…IILA, FALF…FWII, and MLLM…AMIV. The TLC domain maps to 71 to 278; the sequence is VKCKESLWKL…ICAMIVRLLK (208 aa). Phosphoserine occurs at positions 289 and 291.

In terms of tissue distribution, expressed ubiquitously with highest levels in pollen.

The protein localises to the endoplasmic reticulum membrane. The catalysed reaction is a sphingoid base + hexadecanoyl-CoA = an N-hexadecanoyl-sphingoid base + CoA + H(+). The enzyme catalyses sphinganine + hexadecanoyl-CoA = N-hexadecanoylsphinganine + CoA + H(+). It catalyses the reaction sphing-4-enine + hexadecanoyl-CoA = N-hexadecanoylsphing-4-enine + CoA + H(+). It carries out the reaction sphinga-(4E,8E)-dienine + hexadecanoyl-CoA = N-hexadecanoylsphinga-(4E,8E)-dienine + CoA + H(+). The catalysed reaction is sphinga-(4E,8Z)-dienine + hexadecanoyl-CoA = N-hexadecanoylsphinga-(4E,8Z)-dienine + CoA + H(+). It functions in the pathway sphingolipid metabolism. Inhibited by the mycotoxin fumonisin B(1), a sphingosine analog mycotoxins produced by pathogenic fungi. Activated by divalent cation such as magnesium Mg(2+), zinc Zn(2+), manganese Mn(2+) and calcium Ca(2+). Functionally, prevents cell division in root meristems and promotes salicylic acid (SA) production and hypersensitive response (HR). Catalyzes the biosynthesis of ceramide sphingolipids with C(16) fatty acids, structural membrane lipids involved in membrane trafficking (e.g. early endosomes) and cell polarity (e.g. polar auxin transport related proteins); accepts only C16:0 fatty acids, but with a wide range of d18 sphingoid bases, such as sphinganine (d18:0) and palmitoyl-CoA. Mediates resistance to sphinganine-analog mycotoxins (SAMs, e.g. fumonisin B(1)) by restoring the sphingolipid biosynthesis. Could salvage the transport of GPI-anchored proteins from the endoplasmic reticulum to the Golgi apparatus in ceramides-depleted cells after SAM exposure. Contributes to hypoxic conditions tolerance (e.g. submergences), especially in the dark, by promoting the formation of very-long-chain (VLC) ceramide species (22:1, 24:1 and 26:1) and of VLC unsaturated ceramides, which are modulating CTR1-mediated ethylene signaling leading to endoplasmic reticulum (ER)-to-nucleus translocation of EIN2 and EIN3. The chain is Ceramide synthase LOH2 from Arabidopsis thaliana (Mouse-ear cress).